The primary structure comprises 512 residues: MTDDYSKLKSEIMDLVSEEFLKTKDDIISVMIENNKLKRAELVVGNDSLPPPPPTPSIVKIEHTTTTSNIDDLPLPPPIQEVEEEEPTQQNIEQQQQTQDESDDYYKTVHPLGVQDTYEDEEYFSSYSKISLHHEMVFDKRRTAAYYHAISKSKNIFKDKVVLDVGCGTGILSCFVAKAGAKKVYAVDASDMAHRAELIVQQNGLADIVTVFKGKLEHIAFPEYVDVIVSEWQGAFLIFESMIESVIYARDNLMRPGGIILPSKASIYLSPINVDSFYNQYINQWSNVFNLDMSPLIPFAQEELLEEKTIRNYYVDNQDSVLDKPIILRTIDLSTITIEDLSKTVKTFEFQVPNGSKYHGFGSWFSVWFENLDDDDDDNDNNNNNNDNSNDDENKQQFAYYTIDRDGELVKSTYQQYSIDSKGLTPLFFKQSSNVLELSTAPGTGDQHWKQVLFLNSKEKILQSSDKQLDTTSIKGTIRILQNKDYRRHWWIEMYVSLKTNPFDYSYQKYLI.

The disordered stretch occupies residues 67-103 (TSNIDDLPLPPPIQEVEEEEPTQQNIEQQQQTQDESD). A compositionally biased stretch (low complexity) spans 88–99 (TQQNIEQQQQTQ). In terms of domain architecture, SAM-dependent MTase PRMT-type spans 120–508 (DEEYFSSYSK…KTNPFDYSYQ (389 aa)). S-adenosyl-L-methionine contacts are provided by histidine 133, arginine 142, glycine 166, and glutamate 217. Catalysis depends on residues glutamate 231 and glutamate 240. A disordered region spans residues 375–395 (DDDDNDNNNNNNDNSNDDENK).

It belongs to the class I-like SAM-binding methyltransferase superfamily. Protein arginine N-methyltransferase family.

The protein localises to the cytoplasm. It localises to the nucleus. It catalyses the reaction L-arginyl-[protein] + 2 S-adenosyl-L-methionine = N(omega),N(omega)-dimethyl-L-arginyl-[protein] + 2 S-adenosyl-L-homocysteine + 2 H(+). Its function is as follows. Arginine methyltransferase that methylates the guanidino nitrogens of arginyl residues in some proteins such as histones. This is Protein arginine N-methyltransferase 2 (prmt2) from Dictyostelium discoideum (Social amoeba).